We begin with the raw amino-acid sequence, 117 residues long: Probable non-functional T cell receptor gamma variable (117 aa).

Positions 1-20 are cleaved as a signal peptide; sequence MRWALAVLLAFLSPASQISS. Positions 21–117 constitute an Ig-like domain; the sequence is NLEGRTKSVT…GFYYCATWDR (97 aa). Cysteines 41 and 112 form a disulfide. Asn-105 carries N-linked (GlcNAc...) asparagine glycosylation.

As to quaternary structure, gamma-delta TR is a heterodimer composed of a gamma and delta chain; disulfide-linked. The gamma-delta TR is associated with the transmembrane signaling CD3 coreceptor proteins following the stoichiometry: a single gamma-delta TR heterodimer associates with one CD3D-CD3E heterodimer, one CD3G-CD3E heterodimer and one CD247 homodimer forming a stable octameric structure. Upon activation, gamma-delta TR complex associates with FCER1G to initiate intracellular signaling.

Its subcellular location is the cell membrane. In terms of biological role, probable non-functional open reading frame (ORF) of V region of the variable domain of T cell receptor (TR) gamma chain. Non-functional ORF generally cannot participate in the synthesis of a productive T cell receptor (TR) chain due to altered V-(D)-J or switch recombination and/or splicing site (at mRNA level) and/or conserved amino acid change (protein level). Gamma-delta TRs recognize a variety of self and foreign non-peptide antigens frequently expressed at the epithelial boundaries between the host and external environment, including endogenous lipids presented by MH-like protein CD1D and phosphoantigens presented by butyrophilin-like molecule BTN3A1. Upon antigen recognition induces rapid, innate-like immune responses involved in pathogen clearance and tissue repair. Binding of gamma-delta TR complex to antigen triggers phosphorylation of immunoreceptor tyrosine-based activation motifs (ITAMs) in the CD3 chains by the LCK and FYN kinases, allowing the recruitment, phosphorylation, and activation of ZAP70 that facilitates phosphorylation of the scaffolding proteins LCP2 and LAT. This lead to the formation of a supramolecular signalosome that recruits the phospholipase PLCG1, resulting in calcium mobilization and ERK activation, ultimately leading to T cell expansion and differentiation into effector cells. Gamma-delta TRs are produced through somatic rearrangement of a limited repertoire of variable (V), diversity (D), and joining (J) genes. The potential diversity of gamma-delta TRs is conferred by the unique ability to rearrange (D) genes in tandem and to utilize all three reading frames. The combinatorial diversity is considerably increased by the sequence exonuclease trimming and random nucleotide (N) region additions which occur during the V-(D)-J rearrangements. The chain is Probable non-functional T cell receptor gamma variable from Homo sapiens (Human).